A 447-amino-acid polypeptide reads, in one-letter code: Protein cortex (447 aa).

WD repeat units follow at residues 108 to 148 (TYSY…IGHG), 149 to 188 (FAEY…KIMS), 198 to 237 (NMNC…ISWR), 281 to 325 (DSDW…VRDT), 344 to 380 (GELV…DQWG), and 384 to 423 (SGLD…NKMK). A D-box motif is present at residues 384 to 395 (SGLDRVRTMIFS).

Belongs to the WD repeat CORT family.

It localises to the cytoplasm. Controls wing pigmentation patterning by regulating scale cell development, thereby playing a key role in mimicry and crypsis. Probably acts as an activator of the anaphase promoting complex/cyclosome (APC/C) that promotes the ubiquitin ligase activity and substrate specificity of the APC/C. The sequence is that of Protein cortex from Heliconius melpomene (Postman butterfly).